The following is a 158-amino-acid chain: 2S seed storage albumin protein (158 aa).

The signal sequence occupies residues 1–21 (MTKFTILLISLLFCIAHTCSA). A Cell attachment site motif is present at residues 54–56 (RGD). Residues 65 to 81 (NHILRTMRGRINYIRRN) constitute a propeptide that is removed on maturation.

Belongs to the 2S seed storage albumins family. In terms of assembly, the protein consists of two chains linked by 2 disulfide bonds. In terms of tissue distribution, expressed in cotyledons. Maximal expression in parenchyma cells undergoing DNA endoreduplication and cell expansion but not in actively dividing cells of the cotyledon.

Its function is as follows. This is a 2S seed storage protein. In terms of biological role, binds to mammalian chromatin, preventing the normal formation of the kinetochore complex in the centromere and leading to the disruption of mitosis. In Glycine max (Soybean), this protein is 2S seed storage albumin protein.